The primary structure comprises 153 residues: Probable disulfide formation protein (153 aa).

Residues 4–23 traverse the membrane as a helical segment; the sequence is DTRLYLAWLVALAATLGSLY. Cys-33 and Cys-36 are joined by a disulfide. A run of 2 helical transmembrane segments spans residues 38–57 and 64–81; these read AQRI…AFVG and YVLP…FQNL. Cysteines 93 and 101 form a disulfide. The helical transmembrane segment at 117 to 139 threads the bilayer; that stretch reads RALTIPVLSMIAFALILALLSWP.

The protein belongs to the DsbB family. BdbC subfamily.

The protein localises to the cell membrane. Functionally, required for disulfide bond formation in some proteins. This chain is Probable disulfide formation protein, found in Deinococcus radiodurans (strain ATCC 13939 / DSM 20539 / JCM 16871 / CCUG 27074 / LMG 4051 / NBRC 15346 / NCIMB 9279 / VKM B-1422 / R1).